We begin with the raw amino-acid sequence, 177 residues long: Large ribosomal subunit protein uL6 (177 aa).

This sequence belongs to the universal ribosomal protein uL6 family. Part of the 50S ribosomal subunit.

In terms of biological role, this protein binds to the 23S rRNA, and is important in its secondary structure. It is located near the subunit interface in the base of the L7/L12 stalk, and near the tRNA binding site of the peptidyltransferase center. The sequence is that of Large ribosomal subunit protein uL6 from Marinomonas sp. (strain MWYL1).